The following is a 287-amino-acid chain: MDEIVKNIREGTHVLLPFYETLPELNLSLGKSPLPSLEYGANYFLQISRVNDLNRMPTDMLKLFTHDIMLPESDLDKVYEILKINSVKYYGRSTKADAVVADLSARNKLFKRERDAIKSNNHLTENNLYISDYKMLTFDVFRPLFDFVNEKYCIIKLPTLFGRGVIDTMRIYCSLFKNVRLLKCVSDSWLKDSAIMVASDVCKKNLDLFMSHVKSVTKSSSWKDVNSVQFSILNNPVDTEFINKFLEFSNRVYEALYYVHSLLYSSMTSDSKSIENKHQRRLVKLLL.

This sequence belongs to the orthopoxvirus mRNA-capping enzyme regulatory subunit family. Interacts with the catalytic subunit OPG113.

The protein resides in the virion. Regulatory subunit of the mRNA cap enzyme which stabilizes the catalytic subunit and enhances its methyltransferase activity through an allosteric mechanism. Heterodimeric mRNA capping enzyme catalyzes the linkage of a N7-methyl-guanosine moiety to the first transcribed nucleotide (cap 0 structure), whereas the methyltransferase OPG102 is responsible for a second methylation at the 2'-O position of the ribose (cap 1 structure). Also involved in early viral gene transcription termination and intermediate viral gene transcription initiation. Early gene transcription termination requires the termination factor VTF, the DNA-dependent ATPase NPH-I/OPG123 and the RAP94/OPG109 subunit of the viral RNA polymerase, as well as the presence of a specific termination motif. Binds, together with RAP94/OPG109, to the termination motif 5'-UUUUUNU-3' in the nascent early mRNA. This is mRNA-capping enzyme regulatory subunit OPG124 (OPG124) from Bos taurus (Bovine).